A 1604-amino-acid polypeptide reads, in one-letter code: Ubiquitin carboxyl-terminal hydrolase 32 (1604 aa).

EF-hand domains are found at residues 91 to 126 (KDEE…VDGK), 228 to 263 (IRPS…CCRG), and 264 to 299 (PLAE…LLEV). Residues Asp-241, Asn-243, Asp-245, His-247, Glu-252, Asp-277, Asp-279, Asp-281, and Glu-288 each contribute to the Ca(2+) site. Residues 369–585 (ATPEEEGQII…SNLALPRPVI (217 aa)) enclose the DUSP domain. The USP domain occupies 734–1567 (TGLSNLGNTC…SAYILFYEQQ (834 aa)). The Nucleophile role is filled by Cys-743. Tyr-1173 carries the phosphotyrosine modification. A Phosphoserine modification is found at Ser-1350. Residues 1353 to 1432 (EEDVLLSKSP…SKENLDTSKE (80 aa)) are disordered. Positions 1360–1370 (KSPSSLSANVT) are enriched in polar residues. Low complexity predominate over residues 1371-1399 (SSPKGSPSSSRKSGASCPSSKNSSPNSSP). Residues Ser-1372 and Ser-1376 each carry the phosphoserine modification. Over residues 1415 to 1424 (GSKNKLSNSK) the composition is skewed to polar residues. Ser-1454 carries the post-translational modification Phosphoserine. The interval 1484–1504 (SNGQLGNHSEEDSTDDQREET) is disordered. Positions 1491-1504 (HSEEDSTDDQREET) are enriched in basic and acidic residues. The active-site Proton acceptor is the His-1526. Position 1588 is a phosphoserine (Ser-1588). Cys-1601 bears the Cysteine methyl ester mark. A lipid anchor (S-farnesyl cysteine) is attached at Cys-1601. The propeptide at 1602–1604 (VLQ) is removed in mature form.

It belongs to the peptidase C19 family.

The protein resides in the golgi apparatus membrane. The catalysed reaction is Thiol-dependent hydrolysis of ester, thioester, amide, peptide and isopeptide bonds formed by the C-terminal Gly of ubiquitin (a 76-residue protein attached to proteins as an intracellular targeting signal).. Its function is as follows. Deubiquitinase that can remove conjugated ubiquitin from target proteins, such as RAB7A and LAMTOR1. Acts as a positive regulator of the mTORC1 signaling by mediating deubiquitination of LAMTOR1, thereby promoting the association between LAMTOR1 and the lysosomal V-ATPase complex and subsequent activation of the mTORC1 complex. The chain is Ubiquitin carboxyl-terminal hydrolase 32 from Mus musculus (Mouse).